Reading from the N-terminus, the 678-residue chain is RNA helicase NPH-II (678 aa).

The 177-residue stretch at 175 to 351 (FESWIHHVPV…EFFTESVFVH (177 aa)) folds into the Helicase ATP-binding domain. Position 188–195 (188–195 (GDTGVGKT)) interacts with ATP. The DEXH box motif lies at 300 to 303 (DEVH). The 176-residue stretch at 371-546 (SLNKFMYIEE…VFDLQLPEDL (176 aa)) folds into the Helicase C-terminal domain.

This sequence belongs to the DEAD box helicase family. DEAH subfamily. Monomer.

The protein localises to the virion. It catalyses the reaction ATP + H2O = ADP + phosphate + H(+). NTP-dependent helicase that catalyzes unidirectional unwinding of 3'tailed duplex RNAs and plays an important role during transcription of early mRNAs, presumably by preventing R-loop formation behind the elongating RNA polymerase. Might also play a role in the export of newly synthesized mRNA chains out of the core into the cytoplasm. Required for replication and propagation of viral particles. The chain is RNA helicase NPH-II (OPG084) from Oryctolagus cuniculus (Rabbit).